A 264-amino-acid polypeptide reads, in one-letter code: tRNA-uridine aminocarboxypropyltransferase A (264 aa).

Zn(2+) contacts are provided by Cys-25, Cys-28, Cys-35, and Cys-37. The short motif at 144-147 is the DXTW element; it reads DATW. Positions 245-264 are disordered; that stretch reads RPKLLKKRFQNQQPLEQEEE. Polar residues predominate over residues 254-264; the sequence is QNQQPLEQEEE.

It belongs to the TDD superfamily. DTWD2 family.

The enzyme catalyses a uridine in tRNA + S-adenosyl-L-methionine = a 3-[(3S)-3-amino-3-carboxypropyl]uridine in tRNA + S-methyl-5'-thioadenosine + H(+). Its function is as follows. Catalyzes the formation of 3-(3-amino-3-carboxypropyl)uridine (acp3U) at position 20a in the D-loop of several cytoplasmic tRNAs (acp3U(20a)). This is tRNA-uridine aminocarboxypropyltransferase A from Arabidopsis thaliana (Mouse-ear cress).